The following is a 370-amino-acid chain: 3-isopropylmalate dehydrogenase (370 aa).

76-89 (GPKWDQNPSELRPE) provides a ligand contact to NAD(+). Positions 96, 106, 134, and 224 each coordinate substrate. Asp224, Asp248, and Asp252 together coordinate Mg(2+). 282–294 (GSAPDIAGQNIAN) serves as a coordination point for NAD(+).

The protein belongs to the isocitrate and isopropylmalate dehydrogenases family. LeuB type 1 subfamily. In terms of assembly, homodimer. Requires Mg(2+) as cofactor. Mn(2+) is required as a cofactor.

It is found in the cytoplasm. The enzyme catalyses (2R,3S)-3-isopropylmalate + NAD(+) = 4-methyl-2-oxopentanoate + CO2 + NADH. It functions in the pathway amino-acid biosynthesis; L-leucine biosynthesis; L-leucine from 3-methyl-2-oxobutanoate: step 3/4. Catalyzes the oxidation of 3-carboxy-2-hydroxy-4-methylpentanoate (3-isopropylmalate) to 3-carboxy-4-methyl-2-oxopentanoate. The product decarboxylates to 4-methyl-2 oxopentanoate. The protein is 3-isopropylmalate dehydrogenase of Bacillus licheniformis (strain ATCC 14580 / DSM 13 / JCM 2505 / CCUG 7422 / NBRC 12200 / NCIMB 9375 / NCTC 10341 / NRRL NRS-1264 / Gibson 46).